A 368-amino-acid polypeptide reads, in one-letter code: RNA polymerase sigma factor SigA (368 aa).

A disordered region spans residues 60 to 86; the sequence is VVDENGDPSEHSLKKDEKEAEKAQAED. The span at 67-84 shows a compositional bias: basic and acidic residues; that stretch reads PSEHSLKKDEKEAEKAQA. Residues 135–205 are sigma-70 factor domain-2; it reads LAEANLRLVV…TRAIADQART (71 aa). An Interaction with polymerase core subunit RpoC motif is present at residues 159 to 162; it reads DLIQ. Residues 214-290 form a sigma-70 factor domain-3 region; sequence ETINKLIRIQ…DQDATSPAEH (77 aa). The tract at residues 303–356 is sigma-70 factor domain-4; sequence VLDTLTDREENVLRLRFGLDDGRTRTLEEVGKVFGVTRERIRQIEAKALRKLRH. The segment at residues 329 to 348 is a DNA-binding region (H-T-H motif); the sequence is LEEVGKVFGVTRERIRQIEA.

It belongs to the sigma-70 factor family. RpoD/SigA subfamily. As to quaternary structure, interacts transiently with the RNA polymerase catalytic core.

It is found in the cytoplasm. Its function is as follows. Sigma factors are initiation factors that promote the attachment of RNA polymerase to specific initiation sites and are then released. This sigma factor is the primary sigma factor during exponential growth. This is RNA polymerase sigma factor SigA from Enterococcus faecalis (strain ATCC 700802 / V583).